Here is a 775-residue protein sequence, read N- to C-terminus: Semaphorin-3E (775 aa).

A signal peptide spans Met1 to Ser25. The 485-residue stretch at Arg32 to Phe516 folds into the Sema domain. Asn44 carries N-linked (GlcNAc...) asparagine glycosylation. A disulfide bridge links Cys105 with Cys115. Asn126 is a glycosylation site (N-linked (GlcNAc...) asparagine). Cys133 and Cys142 are joined by a disulfide. Residues Asn175 and Asn330 are each glycosylated (N-linked (GlcNAc...) asparagine). Intrachain disulfides connect Cys270–Cys382, Cys294–Cys342, and Cys519–Cys537. Residues Ala581 to Thr669 enclose the Ig-like C2-type domain. Asn596 is a glycosylation site (N-linked (GlcNAc...) asparagine). A disulfide bridge links Cys654 with Cys729.

Belongs to the semaphorin family. As to quaternary structure, interacts with PLXND1. In terms of tissue distribution, detected in neurons in the thalamus. Detected in embryonic vasculature. Developing lungs, developing skeletal elements and ventral horns of the developing neural tube. Correlates positively with tumor progression.

It is found in the secreted. Functionally, plays an important role in signaling via the cell surface receptor PLXND1. Mediates reorganization of the actin cytoskeleton, leading to the retraction of cell projections. Promotes focal adhesion disassembly and inhibits adhesion of endothelial cells to the extracellular matrix. Regulates angiogenesis, both during embryogenesis and after birth. Can down-regulate sprouting angiogenesis. Required for normal vascular patterning during embryogenesis. Plays an important role in ensuring the specificity of synapse formation. The protein is Semaphorin-3E (Sema3e) of Mus musculus (Mouse).